The primary structure comprises 57 residues: MIQSPTSFLIVLILLWCKLVISCFRECIVALQQLIQVLLQIINSNLQSRLLLWHSLD.

The signal sequence occupies residues 1–23 (MIQSPTSFLIVLILLWCKLVISC).

Its function is as follows. Involved in resistance to IFN. This Avian infectious bronchitis virus (strain UK/183/66) (IBV) protein is Non-structural protein 3a.